Consider the following 232-residue polypeptide: 7-cyano-7-deazaguanine synthase (232 aa).

Ala11–Ala21 serves as a coordination point for ATP. Residues Cys192, Cys200, Cys203, and Cys206 each contribute to the Zn(2+) site.

This sequence belongs to the QueC family. The cofactor is Zn(2+).

The enzyme catalyses 7-carboxy-7-deazaguanine + NH4(+) + ATP = 7-cyano-7-deazaguanine + ADP + phosphate + H2O + H(+). The protein operates within purine metabolism; 7-cyano-7-deazaguanine biosynthesis. In terms of biological role, catalyzes the ATP-dependent conversion of 7-carboxy-7-deazaguanine (CDG) to 7-cyano-7-deazaguanine (preQ(0)). This chain is 7-cyano-7-deazaguanine synthase, found in Haloarcula marismortui (strain ATCC 43049 / DSM 3752 / JCM 8966 / VKM B-1809) (Halobacterium marismortui).